The chain runs to 400 residues: Probable tRNA pseudouridine synthase D (400 aa).

Residue Asp-89 is the Nucleophile of the active site. Residues 162-357 (GVPNYYGLQR…AGGDRKPALL (196 aa)) enclose the TRUD domain.

This sequence belongs to the pseudouridine synthase TruD family.

It carries out the reaction uridine(13) in tRNA = pseudouridine(13) in tRNA. Could be responsible for synthesis of pseudouridine from uracil-13 in transfer RNAs. In Methanopyrus kandleri (strain AV19 / DSM 6324 / JCM 9639 / NBRC 100938), this protein is Probable tRNA pseudouridine synthase D.